Reading from the N-terminus, the 357-residue chain is Solute carrier family 25 member 3 (357 aa).

The transit peptide at 1-45 (MFSSVAHLARANPFNAPHLQLVHDGLSGPRSPPAPPRRSRHLAAA) directs the protein to the mitochondrion. Residues 46–58 (AVEEYSCEFGSMK) lie on the Mitochondrial intermembrane side of the membrane. 3 Solcar repeats span residues 58–142 (KYYA…FKAL), 155–239 (WRTS…TVEA), and 256–334 (EQLV…VKVY). The chain crosses the membrane as a helical span at residues 59-81 (YYALCGFGGVLSCGLTHTAVVPL). At 82 to 116 (DLVKCRMQVDPQKYKGIFNGFSITLKEDGVRGLAK) the chain is on the mitochondrial matrix side. At Lys94 the chain carries N6-acetyllysine. N6-methyllysine is present on Lys107. A helical transmembrane segment spans residues 117 to 136 (GWAPTLIGYSMQGLCKFGFY). The Mitochondrial intermembrane portion of the chain corresponds to 137–156 (EVFKALYSNILGEENTYLWR). A helical membrane pass occupies residues 157–178 (TSLYLASSASAEFFADIALAPM). The Mitochondrial matrix portion of the chain corresponds to 179 to 213 (EAAKVRIQTQPGYANTLREAVPKMYKEEGLNAFYK). Position 191 is a phosphotyrosine (Tyr191). Position 204 is an N6-acetyllysine (Lys204). A helical membrane pass occupies residues 214-233 (GVAPLWMRQIPYTMMKFACF). Residues 234–256 (ERTVEALYKFVVPKPRSECTKAE) lie on the Mitochondrial intermembrane side of the membrane. Residues 257 to 279 (QLVVTFVAGYIAGVFCAIVSHPA) form a helical membrane-spanning segment. Residues 280–309 (DSVVSVLNKEKGSTASQVLQRLGFRGVWKG) lie on the Mitochondrial matrix side of the membrane. A helical transmembrane segment spans residues 310-328 (LFARIIMIGTLTALQWFIY). The Mitochondrial intermembrane segment spans residues 329–357 (DSVKVYFRLPRPPPPEMPESLKKKLGLTE).

This sequence belongs to the mitochondrial carrier (TC 2.A.29) family. As to quaternary structure, interacts with PPIF; the interaction is impaired by CsA.

The protein localises to the mitochondrion inner membrane. The enzyme catalyses phosphate(in) + H(+)(in) = phosphate(out) + H(+)(out). Functionally, inorganic ion transporter that transports phosphate or copper ions across the mitochondrial inner membrane into the matrix compartment. Mediates proton-coupled symport of phosphate ions necessary for mitochondrial oxidative phosphorylation of ADP to ATP. Transports copper ions probably in the form of anionic copper(I) complexes to maintain mitochondrial matrix copper pool and to supply copper for cytochrome C oxidase complex assembly. May also play a role in regulation of the mitochondrial permeability transition pore (mPTP). This Mus musculus (Mouse) protein is Solute carrier family 25 member 3.